A 302-amino-acid polypeptide reads, in one-letter code: Syntaxin-17 (302 aa).

At Ser2 the chain carries N-acetylserine. Residues 2-228 (SEDEEKVKLR…KNLGKAAKYK (227 aa)) are Cytoplasmic-facing. The residue at position 41 (Lys41) is an N6-acetyllysine. Residues 53–123 (EEHINAGRTV…EELKKQFNDE (71 aa)) are a coiled coil. Phosphotyrosine; by ABL1 is present on Tyr157. Residues 162 to 224 (IPRDQNAAES…EEGTKNLGKA (63 aa)) enclose the t-SNARE coiled-coil homology domain. Residues 229 to 249 (LAALPVAGALIGGVVGGPIGL) form a helical membrane-spanning segment. A necessary and sufficient for localization to autophagosome region spans residues 229–275 (LAALPVAGALIGGVVGGPIGLLAGFKVAGIAAALGGGVLGFTGGKLI). Topologically, residues 250 to 254 (LAGFK) are lumenal. Residues 255-275 (VAGIAAALGGGVLGFTGGKLI) form a helical membrane-spanning segment. At 276–302 (QRRKQKMMEKLASSCPDLPSQTDKKCS) the chain is on the cytoplasmic side. Ser289 carries the post-translational modification Phosphoserine. The Endoplasmic reticulum retention signal signature appears at 299 to 302 (KKCS).

The protein belongs to the syntaxin family. Forms a SNARE complex composed of VAMP8, SNAP29 and STX17 involved in fusion of autophagosome with lysosome. May interact with VTI1B. Probably interacts with BET1, SCFD1 and SEC22B. Interacts with PTPN2 and ABL1; involved in STX17 phosphorylation. Interacts with COPB1. Interacts with TMED9 and TMED10; the interaction is direct. Interacts with VAMP7. Interacts with RUBCNL/PACER; promoting targeting of RUBCNL/PACER to autophagosome. Interacts with VAMP8, SNAP29, VPS39 and VPS41; these interactions are increased in the absence of TMEM39A. Interacts with IRGM; promoting STX17 recruitment to autophagosomes. Interacts with ATG8 proteins GABARAP and MAP1LC3B. Interacts with RNF115; this interaction enhances STX17 stability which in turn promotes autophagosome maturation. Interacts with RAB39A (GTP-bound); the interaction promotes autophagosome-lysosome membrane fusion driven by STX17-SNAP29-VAMP8. Interacts with RAB39B; the interaction may promote a different fonction in autophagy as compared with RAB39A. Phosphorylated at Tyr-157 probably by ABL1. Dephosphorylation by PTPN2; regulates exit from the endoplasmic reticulum.

Its subcellular location is the endoplasmic reticulum membrane. The protein resides in the smooth endoplasmic reticulum membrane. It is found in the endoplasmic reticulum-Golgi intermediate compartment membrane. It localises to the cytoplasmic vesicle. The protein localises to the autophagosome membrane. Its subcellular location is the COPII-coated vesicle membrane. The protein resides in the cytoplasm. It is found in the cytosol. It localises to the mitochondrion membrane. The protein localises to the autolysosome membrane. Functionally, SNAREs, soluble N-ethylmaleimide-sensitive factor-attachment protein receptors, are essential proteins for fusion of cellular membranes. SNAREs localized on opposing membranes assemble to form a trans-SNARE complex, an extended, parallel four alpha-helical bundle that drives membrane fusion. STX17 is a SNARE of the autophagosome involved in autophagy through the direct control of autophagosome membrane fusion with the lysosome membrane. May also play a role in the early secretory pathway where it may maintain the architecture of the endoplasmic reticulum-Golgi intermediate compartment/ERGIC and Golgi and/or regulate transport between the endoplasmic reticulum, the ERGIC and the Golgi. The chain is Syntaxin-17 from Bos taurus (Bovine).